We begin with the raw amino-acid sequence, 482 residues long: uncharacterized protein (482 aa).

WD repeat units lie at residues D92–I133 and G191–K230.

The protein localises to the cytoplasm. Its subcellular location is the nucleus. This is an uncharacterized protein from Schizosaccharomyces pombe (strain 972 / ATCC 24843) (Fission yeast).